We begin with the raw amino-acid sequence, 367 residues long: Heme A synthase (367 aa).

The next 5 membrane-spanning stretches (helical) occupy residues 25–45, 111–131, 139–159, 174–194, and 210–230; these read ALRL…LVGG, LIAR…WLTG, WPLV…WWMV, LATH…IMRG, and GFAA…ALVA. Heme is bound at residue H274. A run of 3 helical transmembrane segments spans residues 276-296, 305-325, and 327-347; these read IGAY…LRAA, AVVL…TLLM, and VPLH…GFAV. H335 lines the heme pocket.

The protein belongs to the COX15/CtaA family. Type 2 subfamily. As to quaternary structure, interacts with CtaB. It depends on heme b as a cofactor.

It localises to the cell membrane. The enzyme catalyses Fe(II)-heme o + 2 A + H2O = Fe(II)-heme a + 2 AH2. Its pathway is porphyrin-containing compound metabolism; heme A biosynthesis; heme A from heme O: step 1/1. Functionally, catalyzes the conversion of heme O to heme A by two successive hydroxylations of the methyl group at C8. The first hydroxylation forms heme I, the second hydroxylation results in an unstable dihydroxymethyl group, which spontaneously dehydrates, resulting in the formyl group of heme A. This chain is Heme A synthase, found in Rhizobium etli (strain CIAT 652).